The following is a 421-amino-acid chain: UDP-N-acetylglucosamine 1-carboxyvinyltransferase 1 (421 aa).

22-23 (KN) contacts phosphoenolpyruvate. R95 provides a ligand contact to UDP-N-acetyl-alpha-D-glucosamine. The Proton donor role is filled by C119. C119 is subject to 2-(S-cysteinyl)pyruvic acid O-phosphothioketal. UDP-N-acetyl-alpha-D-glucosamine-binding positions include 124–128 (RPIEQ), D308, and V330.

Belongs to the EPSP synthase family. MurA subfamily.

The protein localises to the cytoplasm. The catalysed reaction is phosphoenolpyruvate + UDP-N-acetyl-alpha-D-glucosamine = UDP-N-acetyl-3-O-(1-carboxyvinyl)-alpha-D-glucosamine + phosphate. It participates in cell wall biogenesis; peptidoglycan biosynthesis. Cell wall formation. Adds enolpyruvyl to UDP-N-acetylglucosamine. The polypeptide is UDP-N-acetylglucosamine 1-carboxyvinyltransferase 1 (Staphylococcus aureus (strain MW2)).